The sequence spans 161 residues: Ribosome maturation factor RimP (161 aa).

This sequence belongs to the RimP family.

It localises to the cytoplasm. Functionally, required for maturation of 30S ribosomal subunits. In Janthinobacterium sp. (strain Marseille) (Minibacterium massiliensis), this protein is Ribosome maturation factor RimP.